The chain runs to 164 residues: Transcription antitermination protein NusB (164 aa).

A disordered region spans residues 144–164; that stretch reads KNGRGLIDHTPPRAAKTDAKS. Residues 149–164 are compositionally biased toward basic and acidic residues; that stretch reads LIDHTPPRAAKTDAKS.

Belongs to the NusB family.

In terms of biological role, involved in transcription antitermination. Required for transcription of ribosomal RNA (rRNA) genes. Binds specifically to the boxA antiterminator sequence of the ribosomal RNA (rrn) operons. In Chlorobium phaeovibrioides (strain DSM 265 / 1930) (Prosthecochloris vibrioformis (strain DSM 265)), this protein is Transcription antitermination protein NusB.